We begin with the raw amino-acid sequence, 60 residues long: Putative mercuric resistance protein (60 aa).

The sequence is that of Putative mercuric resistance protein from Shigella flexneri.